The primary structure comprises 177 residues: Probable chemoreceptor glutamine deamidase CheD (177 aa).

This sequence belongs to the CheD family.

The catalysed reaction is L-glutaminyl-[protein] + H2O = L-glutamyl-[protein] + NH4(+). Its function is as follows. Probably deamidates glutamine residues to glutamate on methyl-accepting chemotaxis receptors (MCPs), playing an important role in chemotaxis. The polypeptide is Probable chemoreceptor glutamine deamidase CheD (Pseudomonas fluorescens (strain SBW25)).